Here is a 234-residue protein sequence, read N- to C-terminus: Interleukin-34 (234 aa).

The N-terminal stretch at 1–20 (MPQGLAWLRYLGILLGMALG) is a signal peptide. Asn-76 is a glycosylation site (N-linked (GlcNAc...) asparagine). The segment at 191 to 234 (EAPQPQPRSPASAQCEAAQLYPLPQPPSTSLPRVLGPSAGPPTQ) is disordered.

The protein belongs to the IL-34 family. As to quaternary structure, homodimer. Interacts with CSF1R.

It localises to the secreted. Its function is as follows. Cytokine that promotes the proliferation, survival and differentiation of monocytes and macrophages. Promotes the release of pro-inflammatory chemokines, and thereby plays an important role in innate immunity and in inflammatory processes. Plays an important role in the regulation of osteoclast proliferation and differentiation, and in the regulation of bone resorption. Signaling via CSF1R and its downstream effectors stimulates phosphorylation of MAPK1/ERK2 AND MAPK3/ERK1. The polypeptide is Interleukin-34 (Bos taurus (Bovine)).